The sequence spans 107 residues: U1-lycotoxin-Ls1k (107 aa).

An N-terminal signal peptide occupies residues M1–S20. A propeptide spanning residues E21 to R41 is cleaved from the precursor. 4 disulfides stabilise this stretch: C44/C59, C51/C68, C58/C86, and C70/C84.

It belongs to the neurotoxin 19 (CSTX) family. 04 (U1-Lctx) subfamily. Expressed by the venom gland.

The protein localises to the secreted. The chain is U1-lycotoxin-Ls1k from Lycosa singoriensis (Wolf spider).